Consider the following 399-residue polypeptide: Octopine dehydrogenase (399 aa).

NADH contacts are provided by residues 10 to 13 (GGNG) and 35 to 38 (FADE). Glutamine 118 and threonine 143 together coordinate pyruvate. Residue glutamine 118 participates in substrate binding. NAD(+) is bound at residue cysteine 148. An L-arginine-binding site is contributed by methionine 206. Histidine 212 is a pyruvate binding site. The active site involves histidine 212. Arginine 324 contacts NAD(+).

Belongs to the lysopine/nopaline/octopine/opine/vitopine dehydrogenases family.

It carries out the reaction D-octopine + NAD(+) + H2O = L-arginine + pyruvate + NADH + H(+). Agmatine acts as a competitive inhibitor of the condensation reaction where the L-arginine and agmatine substrates compete for the same site. Functionally, catalyzes the reverse reaction of octopine dehydrogenation. Acts on L-arginine in preference to other substrates such as canavanine, cysteine, L-alanine, ornithine or norvaline, owing to the presence of the positively charged guanidium group. This chain is Octopine dehydrogenase, found in Pecten maximus (King scallop).